The primary structure comprises 276 residues: MAQFTLYNKHSAPPSSESTRVDCEHVPLCSINDVQLRFLVPDDLTEVRQLCQEWFPIDYPLSWYEDITSSTRFFALAAVYNLAIIGLIVAEIKPYRNVNKEVIANMSDSDELYTRLSGFPMQDKGILPDSMGRSADVGYILSLGVHRSHRRNGIGSLLLDALMNHLTTAERHSVKAIFLHTLTTNQPAIFFYEKRRFTLHSFLPYYYNIRGKGKDGFTYVNYINGGHPPWTLLDHIKHYASMVRHTSSLCAWLAGRVQQVVRWFYHKLLTRFNFIE.

Residues 34 to 239 enclose the N-acetyltransferase domain; sequence VQLRFLVPDD…WTLLDHIKHY (206 aa). Tyr-59 is a binding site for substrate. Tyr-139 is a catalytic residue. Leu-141 contacts substrate. Acetyl-CoA contacts are provided by residues 143–145 and 151–156; these read LGV and RNGIGS. Residue His-180 is part of the active site. Acetyl-CoA-binding positions include Asn-185 and 192 to 195; that span reads YEKR. The required for homodimerization stretch occupies residues 204–215; it reads PYYYNIRGKGKD. Tyr-207 provides a ligand contact to substrate.

The protein belongs to the acetyltransferase family. NAA60 subfamily.

The enzyme catalyses N-terminal L-methionyl-[transmembrane protein] + acetyl-CoA = N-terminal N(alpha)-acetyl-L-methionyl-[transmembrane protein] + CoA + H(+). It catalyses the reaction L-lysyl-[protein] + acetyl-CoA = N(6)-acetyl-L-lysyl-[protein] + CoA + H(+). Functionally, displays alpha (N-terminal) acetyltransferase activity towards a range of N-terminal sequences including those starting with Met-Lys, Met-Val, Met-Ala and Met-Met. Required for normal chromosomal segregation during anaphase. Its function is as follows. Shows histone acetyltransferase activity toward free histones. Does not show histone acetyltransferase activity toward free histones. This is N-alpha-acetyltransferase 60 from Drosophila melanogaster (Fruit fly).